Consider the following 446-residue polypeptide: 3-phosphoshikimate 1-carboxyvinyltransferase (446 aa).

Positions 30, 31, and 35 each coordinate 3-phosphoshikimate. Lysine 30 is a binding site for phosphoenolpyruvate. The phosphoenolpyruvate site is built by glycine 112 and arginine 140. The 3-phosphoshikimate site is built by serine 186, serine 187, glutamine 188, serine 215, glutamate 334, and histidine 361. Residue glutamine 188 participates in phosphoenolpyruvate binding. The Proton acceptor role is filled by glutamate 334. Residues arginine 365, arginine 406, and lysine 431 each coordinate phosphoenolpyruvate.

Belongs to the EPSP synthase family. In terms of assembly, monomer.

It is found in the cytoplasm. It catalyses the reaction 3-phosphoshikimate + phosphoenolpyruvate = 5-O-(1-carboxyvinyl)-3-phosphoshikimate + phosphate. It functions in the pathway metabolic intermediate biosynthesis; chorismate biosynthesis; chorismate from D-erythrose 4-phosphate and phosphoenolpyruvate: step 6/7. Its function is as follows. Catalyzes the transfer of the enolpyruvyl moiety of phosphoenolpyruvate (PEP) to the 5-hydroxyl of shikimate-3-phosphate (S3P) to produce enolpyruvyl shikimate-3-phosphate and inorganic phosphate. This is 3-phosphoshikimate 1-carboxyvinyltransferase from Streptomyces avermitilis (strain ATCC 31267 / DSM 46492 / JCM 5070 / NBRC 14893 / NCIMB 12804 / NRRL 8165 / MA-4680).